The following is a 200-amino-acid chain: dITP/XTP pyrophosphatase (200 aa).

Position 8-13 (8-13) interacts with substrate; that stretch reads TRNAGK. D72 (proton acceptor) is an active-site residue. Residue D72 coordinates Mg(2+). Substrate-binding positions include S73, 155–158, K178, and 183–184; these read FGYD and HR.

This sequence belongs to the HAM1 NTPase family. In terms of assembly, homodimer. It depends on Mg(2+) as a cofactor.

The enzyme catalyses XTP + H2O = XMP + diphosphate + H(+). The catalysed reaction is dITP + H2O = dIMP + diphosphate + H(+). It carries out the reaction ITP + H2O = IMP + diphosphate + H(+). Its function is as follows. Pyrophosphatase that catalyzes the hydrolysis of nucleoside triphosphates to their monophosphate derivatives, with a high preference for the non-canonical purine nucleotides XTP (xanthosine triphosphate), dITP (deoxyinosine triphosphate) and ITP. Seems to function as a house-cleaning enzyme that removes non-canonical purine nucleotides from the nucleotide pool, thus preventing their incorporation into DNA/RNA and avoiding chromosomal lesions. This chain is dITP/XTP pyrophosphatase, found in Streptomyces avermitilis (strain ATCC 31267 / DSM 46492 / JCM 5070 / NBRC 14893 / NCIMB 12804 / NRRL 8165 / MA-4680).